The primary structure comprises 88 residues: Small ribosomal subunit protein bS16c (88 aa).

Belongs to the bacterial ribosomal protein bS16 family.

The protein localises to the plastid. Its subcellular location is the chloroplast. This Oenothera elata subsp. hookeri (Hooker's evening primrose) protein is Small ribosomal subunit protein bS16c.